Reading from the N-terminus, the 147-residue chain is Large ribosomal subunit protein uL22 (147 aa).

The interval 110 to 147 (EEKKTVAKKAPAAKKTTTTKAPAKKTTSTKKATAKKES) is disordered. A compositionally biased stretch (low complexity) spans 117 to 140 (KKAPAAKKTTTTKAPAKKTTSTKK).

The protein belongs to the universal ribosomal protein uL22 family. Part of the 50S ribosomal subunit.

Its function is as follows. This protein binds specifically to 23S rRNA; its binding is stimulated by other ribosomal proteins, e.g. L4, L17, and L20. It is important during the early stages of 50S assembly. It makes multiple contacts with different domains of the 23S rRNA in the assembled 50S subunit and ribosome. The globular domain of the protein is located near the polypeptide exit tunnel on the outside of the subunit, while an extended beta-hairpin is found that lines the wall of the exit tunnel in the center of the 70S ribosome. This chain is Large ribosomal subunit protein uL22, found in Campylobacter jejuni subsp. jejuni serotype O:6 (strain 81116 / NCTC 11828).